The chain runs to 512 residues: Monocarboxylate transporter 14 (512 aa).

Topologically, residues 1–29 (MYTSHEDIGYDLEDDRKAKNKKTLKPHPD) are cytoplasmic. 12 helical membrane passes run 30 to 50 (IDGG…ILIM), 76 to 96 (WVSS…GLFI), 105 to 125 (AIIG…AANV), 129 to 149 (FITF…PAVV), 161 to 181 (LAQG…TVLL), 193 to 211 (AMFI…GALM), 317 to 337 (MFVA…IPFI), 355 to 375 (FPLT…LGAV), 381 to 401 (ISVW…IFLL), 410 to 430 (LAVI…MPVV), 446 to 466 (IIIC…GWIF), and 476 to 496 (FYIC…QPCI). Residues 497 to 512 (QMIDQSRRKCIEGAHV) lie on the Cytoplasmic side of the membrane.

The protein belongs to the major facilitator superfamily. Monocarboxylate porter (TC 2.A.1.13) family.

It localises to the cell membrane. In terms of biological role, proton-linked monocarboxylate transporter. May catalyze the transport of monocarboxylates across the plasma membrane. The polypeptide is Monocarboxylate transporter 14 (Slc16a14) (Mus musculus (Mouse)).